Consider the following 80-residue polypeptide: UPF0270 protein AHA_0994 (80 aa).

Belongs to the UPF0270 family.

This is UPF0270 protein AHA_0994 from Aeromonas hydrophila subsp. hydrophila (strain ATCC 7966 / DSM 30187 / BCRC 13018 / CCUG 14551 / JCM 1027 / KCTC 2358 / NCIMB 9240 / NCTC 8049).